We begin with the raw amino-acid sequence, 365 residues long: Aminomethyltransferase (365 aa).

Belongs to the GcvT family. In terms of assembly, the glycine cleavage system is composed of four proteins: P, T, L and H.

It catalyses the reaction N(6)-[(R)-S(8)-aminomethyldihydrolipoyl]-L-lysyl-[protein] + (6S)-5,6,7,8-tetrahydrofolate = N(6)-[(R)-dihydrolipoyl]-L-lysyl-[protein] + (6R)-5,10-methylene-5,6,7,8-tetrahydrofolate + NH4(+). In terms of biological role, the glycine cleavage system catalyzes the degradation of glycine. The polypeptide is Aminomethyltransferase (Halalkalibacterium halodurans (strain ATCC BAA-125 / DSM 18197 / FERM 7344 / JCM 9153 / C-125) (Bacillus halodurans)).